We begin with the raw amino-acid sequence, 562 residues long: Tryptophan 2-monooxygenase (562 aa).

FMN-binding residues include Ser-54, Glu-74, Arg-76, Arg-82, and Arg-104. Arg-104 lines the substrate pocket.

Belongs to the tryptophan 2-monooxygenase family. FMN is required as a cofactor.

The catalysed reaction is L-tryptophan + O2 = indole-3-acetamide + CO2 + H2O. It participates in plant hormone metabolism; auxin biosynthesis. In Pantoea agglomerans pv. gypsophilae (Erwinia herbicola), this protein is Tryptophan 2-monooxygenase (iaaM).